Here is a 506-residue protein sequence, read N- to C-terminus: MPNEIFTINLNAQAIIPEAFILLGIVGTLLVDLAGEKTASKWAPIICYLSIGSSLVSLALQWSNPVENAFLGSFNSDNLAIAFRAIISLSTLISLLISWRYTEQSGSPIGEFAAIVLSATLGAMLLCGSTDLISVFISLETLSVASYLLSGYLKRDPRSSEAALKYLLVGSAAAAVYLYGSSFLYGLSGSTNLATIGLEIINKPSFITSLALVFVLSTVAFKIAAVPFHQWTPDVYEGSPTPVVAFLSVGSKTAGFAFAIRILSTTFSSFDEEWKLLFTILAILSMALGNVVALAQTSMKRMLAYSSIGQAGFVMIGIVSGTQDGLSAAVLYLAAYLFMNLGAFSCVILFSLRTGSDRILDYSGLYQKDPLITLGLSLCLLSLGGLPPMLGFFGKIYLFFAGWANHQYLLVIVGLVTSVISIYYYISVIKMMVVKEPQEASEIVKSYPEINWGIEGLPPLRIALYTCVAVTALGGILSNPLFKLANTAVSETPFLQDIIAIANNIS.

13 consecutive transmembrane segments (helical) span residues 14 to 34 (AIIP…VDLA), 42 to 62 (WAPI…ALQW), 79 to 99 (LAIA…LISW), 108 to 128 (PIGE…LLCG), 132 to 152 (LISV…LSGY), 167 to 187 (LLVG…LYGL), 206 to 226 (FITS…IAAV), 240 to 260 (PTPV…AFAI), 276 to 296 (LLFT…ALAQ), 302 to 322 (MLAY…VSGT), 330 to 350 (VLYL…VILF), 374 to 394 (LGLS…GFFG), and 409 to 429 (LLVI…ISVI).

Belongs to the complex I subunit 2 family. NDH-1 can be composed of about 15 different subunits; different subcomplexes with different compositions have been identified which probably have different functions.

Its subcellular location is the cellular thylakoid membrane. The enzyme catalyses a plastoquinone + NADH + (n+1) H(+)(in) = a plastoquinol + NAD(+) + n H(+)(out). It catalyses the reaction a plastoquinone + NADPH + (n+1) H(+)(in) = a plastoquinol + NADP(+) + n H(+)(out). NDH-1 shuttles electrons from an unknown electron donor, via FMN and iron-sulfur (Fe-S) centers, to quinones in the respiratory and/or the photosynthetic chain. The immediate electron acceptor for the enzyme in this species is believed to be plastoquinone. Couples the redox reaction to proton translocation, and thus conserves the redox energy in a proton gradient. Cyanobacterial NDH-1 also plays a role in inorganic carbon-concentration. The polypeptide is NAD(P)H-quinone oxidoreductase subunit 2 (Prochlorococcus marinus (strain AS9601)).